Consider the following 216-residue polypeptide: Pyridoxine/pyridoxamine 5'-phosphate oxidase 1 (216 aa).

Substrate contacts are provided by residues 10–13 (RREY) and lysine 68. FMN-binding positions include 63–68 (RIVLLK), 78–79 (YT), lysine 85, and glutamine 107. Residues tyrosine 125, arginine 129, and serine 133 each contribute to the substrate site. Residues 142–143 (QS) and tryptophan 186 contribute to the FMN site. A substrate-binding site is contributed by 192–194 (RLH). Arginine 196 is an FMN binding site.

The protein belongs to the pyridoxamine 5'-phosphate oxidase family. As to quaternary structure, homodimer. FMN is required as a cofactor.

The catalysed reaction is pyridoxamine 5'-phosphate + O2 + H2O = pyridoxal 5'-phosphate + H2O2 + NH4(+). It carries out the reaction pyridoxine 5'-phosphate + O2 = pyridoxal 5'-phosphate + H2O2. Its pathway is cofactor metabolism; pyridoxal 5'-phosphate salvage; pyridoxal 5'-phosphate from pyridoxamine 5'-phosphate: step 1/1. It participates in cofactor metabolism; pyridoxal 5'-phosphate salvage; pyridoxal 5'-phosphate from pyridoxine 5'-phosphate: step 1/1. Catalyzes the oxidation of either pyridoxine 5'-phosphate (PNP) or pyridoxamine 5'-phosphate (PMP) into pyridoxal 5'-phosphate (PLP). In Hydrogenovibrio crunogenus (strain DSM 25203 / XCL-2) (Thiomicrospira crunogena), this protein is Pyridoxine/pyridoxamine 5'-phosphate oxidase 1.